A 50-amino-acid polypeptide reads, in one-letter code: DFTPVCTTELGRLAPEFAKRVVFIFGPDKKLKLSILYPATTGRNFDEILR.

One can recognise a Thioredoxin domain in the interval 1-50 (DFTPVCTTELGRLAPEFAKRVVFIFGPDKKLKLSILYPATTGRNFDEILR). T3 is modified (phosphothreonine). C6 functions as the Cysteine sulfenic acid (-SOH) intermediate; for peroxidase activity in the catalytic mechanism. K19 bears the N6-acetyllysine mark. Residue D28 is the For phospholipase activity of the active site.

It belongs to the peroxiredoxin family. Prx6 subfamily. As to quaternary structure, homodimer. Interacts with GSTP1; mediates PRDX6 glutathionylation and regeneration. Interacts with APEX1. Interacts with STH. May interact with FAM168B. May interact with HTR2A. Post-translationally, irreversibly inactivated by overoxidation of Cys-6 to sulfinic acid (Cys-SO(2)H) and sulfonic acid (Cys-SO(3)H) forms upon oxidative stress. Phosphorylation at Thr-177 by MAP kinases increases the phospholipase activity of the enzyme. The phosphorylated form exhibits a greater lysophosphatidylcholine acyltransferase activity compared to the non-phosphorylated form.

It is found in the cytoplasm. Its subcellular location is the lysosome. It catalyses the reaction a hydroperoxide + 2 glutathione = an alcohol + glutathione disulfide + H2O. It carries out the reaction a 1,2-diacyl-sn-glycero-3-phosphocholine + H2O = a 1-acyl-sn-glycero-3-phosphocholine + a fatty acid + H(+). The catalysed reaction is a 1-acyl-sn-glycero-3-phosphocholine + an acyl-CoA = a 1,2-diacyl-sn-glycero-3-phosphocholine + CoA. The enzyme catalyses 1-hexadecanoyl-sn-glycero-3-phosphocholine + hexadecanoyl-CoA = 1,2-dihexadecanoyl-sn-glycero-3-phosphocholine + CoA. It catalyses the reaction 1,2-dihexadecanoyl-sn-glycero-3-phosphocholine + H2O = 1-hexadecanoyl-sn-glycero-3-phosphocholine + hexadecanoate + H(+). Thiol-specific peroxidase that catalyzes the reduction of hydrogen peroxide and organic hydroperoxides to water and alcohols, respectively. Can reduce H(2)O(2) and short chain organic, fatty acid, and phospholipid hydroperoxides. Also has phospholipase activity, and can therefore either reduce the oxidized sn-2 fatty acyl group of phospholipids (peroxidase activity) or hydrolyze the sn-2 ester bond of phospholipids (phospholipase activity). These activities are dependent on binding to phospholipids at acidic pH and to oxidized phospholipds at cytosolic pH. Plays a role in cell protection against oxidative stress by detoxifying peroxides and in phospholipid homeostasis. Exhibits acyl-CoA-dependent lysophospholipid acyltransferase which mediates the conversion of lysophosphatidylcholine (1-acyl-sn-glycero-3-phosphocholine or LPC) into phosphatidylcholine (1,2-diacyl-sn-glycero-3-phosphocholine or PC). Shows a clear preference for LPC as the lysophospholipid and for palmitoyl CoA as the fatty acyl substrate. In Mesocricetus auratus (Golden hamster), this protein is Peroxiredoxin-6.